Reading from the N-terminus, the 388-residue chain is tRNA (guanine(26)-N(2))-dimethyltransferase (388 aa).

Positions 7 to 381 (KTVEEGLTKI…APLKKIKEII (375 aa)) constitute a Trm1 methyltransferase domain. S-adenosyl-L-methionine is bound by residues R40, R70, D88, D115, and A116. Zn(2+) is bound by residues C248, C251, C268, and C271.

It belongs to the class I-like SAM-binding methyltransferase superfamily. Trm1 family.

It carries out the reaction guanosine(26) in tRNA + 2 S-adenosyl-L-methionine = N(2)-dimethylguanosine(26) in tRNA + 2 S-adenosyl-L-homocysteine + 2 H(+). Functionally, dimethylates a single guanine residue at position 26 of a number of tRNAs using S-adenosyl-L-methionine as donor of the methyl groups. This Methanobrevibacter smithii (strain ATCC 35061 / DSM 861 / OCM 144 / PS) protein is tRNA (guanine(26)-N(2))-dimethyltransferase.